A 119-amino-acid chain; its full sequence is Ribonuclease P protein component (119 aa).

The protein belongs to the RnpA family. As to quaternary structure, consists of a catalytic RNA component (M1 or rnpB) and a protein subunit.

It catalyses the reaction Endonucleolytic cleavage of RNA, removing 5'-extranucleotides from tRNA precursor.. In terms of biological role, RNaseP catalyzes the removal of the 5'-leader sequence from pre-tRNA to produce the mature 5'-terminus. It can also cleave other RNA substrates such as 4.5S RNA. The protein component plays an auxiliary but essential role in vivo by binding to the 5'-leader sequence and broadening the substrate specificity of the ribozyme. This Aromatoleum aromaticum (strain DSM 19018 / LMG 30748 / EbN1) (Azoarcus sp. (strain EbN1)) protein is Ribonuclease P protein component.